A 149-amino-acid chain; its full sequence is D-aminoacyl-tRNA deacylase (149 aa).

Positions 137–138 (GP) match the Gly-cisPro motif, important for rejection of L-amino acids motif.

Belongs to the DTD family. As to quaternary structure, homodimer.

It localises to the cytoplasm. It carries out the reaction glycyl-tRNA(Ala) + H2O = tRNA(Ala) + glycine + H(+). The catalysed reaction is a D-aminoacyl-tRNA + H2O = a tRNA + a D-alpha-amino acid + H(+). Its function is as follows. An aminoacyl-tRNA editing enzyme that deacylates mischarged D-aminoacyl-tRNAs. Also deacylates mischarged glycyl-tRNA(Ala), protecting cells against glycine mischarging by AlaRS. Acts via tRNA-based rather than protein-based catalysis; rejects L-amino acids rather than detecting D-amino acids in the active site. By recycling D-aminoacyl-tRNA to D-amino acids and free tRNA molecules, this enzyme counteracts the toxicity associated with the formation of D-aminoacyl-tRNA entities in vivo and helps enforce protein L-homochirality. This is D-aminoacyl-tRNA deacylase from Herminiimonas arsenicoxydans.